Reading from the N-terminus, the 310-residue chain is MEKKLIFGHKNPDTDSICSALVYADLKTKLGANVEPVRLGVISSETAFVLNYFQVKEPRLVETVANEVNEVILVDHNERQQSANDIEQVQVVEVIDHHRIANFETSNPLYFRAEPVGCTTTILKKMYKENGVDIPKEMAGLMLSAIISDTLLLKSPTCTEQDVAAAHELAEIAGVNLEAYGLDMLKAGADLSDKTIEQLLTLDAKEFQMGNAKVEIAQVNAVDVNDVLARQGELEAAMNASIAEKALDLFVFVVTDILNNDSVAIALGSATQAVEKAYQVTLVDNKAVLKGVVSRKKQIVPVLTDTFQAL.

The Mn(2+) site is built by His9, Asp13, Asp15, Asp75, His97, and Asp149.

Belongs to the PPase class C family. Mn(2+) is required as a cofactor.

Its subcellular location is the cytoplasm. It carries out the reaction diphosphate + H2O = 2 phosphate + H(+). The chain is Probable manganese-dependent inorganic pyrophosphatase from Brevibacillus brevis (strain 47 / JCM 6285 / NBRC 100599).